Here is a 246-residue protein sequence, read N- to C-terminus: tRNA (guanine-N(7)-)-methyltransferase (246 aa).

The S-adenosyl-L-methionine site is built by E77, E102, D129, and D152. D152 is an active-site residue. Substrate-binding positions include K156, D188, and 225–228; that span reads TKFE.

This sequence belongs to the class I-like SAM-binding methyltransferase superfamily. TrmB family.

It catalyses the reaction guanosine(46) in tRNA + S-adenosyl-L-methionine = N(7)-methylguanosine(46) in tRNA + S-adenosyl-L-homocysteine. Its pathway is tRNA modification; N(7)-methylguanine-tRNA biosynthesis. Catalyzes the formation of N(7)-methylguanine at position 46 (m7G46) in tRNA. This is tRNA (guanine-N(7)-)-methyltransferase from Haemophilus influenzae (strain ATCC 51907 / DSM 11121 / KW20 / Rd).